Here is a 742-residue protein sequence, read N- to C-terminus: MKFLAFGLIYFHFCILNRCEYITSSTIQKCYNSSNEPNNCSQKAVIVLSLENGQIANTEQVVATLNQLSDSGVNKQLQNSFIFEVTKSPVTALFPLIYLQDFNSQPLEQVIATTLFSCKDGFYDSSPTCKFQYDSKGQKILDSQGYCCYCSLSDILGMGNDLSRGKVCYALNLGAGSATAHCLKFSPLWYSAFKIQQYQLYFEVNINIYTVDSQNQKNLKQTLKLSTSNPTMKSSDNSTISKIIGTFTPTQPPADLSSYYLVKPSFPATDPRVLQGISSWMFVDKTMFTLDGTQCNKIGVSYSGFRQQSSSCSQPVGSCLQNQLENLYQSDLILLSQNKQPKYLLESQGNFNQVQFQGQTILQQGLSGSASTLITIEIDAAQIKFVTNLGIGCISQCSINNFESHSGNGKLVALVQNQGNYSAEFVLGFNCSSNVQPIQGQKLFLTANQLYNFNCSVSVNSDISAINNNCTINLYDAIGNQLDSKNILFNTTSTNHTSNQGNNTGQQQSSQEYKSSQSCSDKCSSFWSFWCYFSAGCIKEAFKSIASIAGVASALALVIFLAKNGYLVPIIRFLCCCCCKSKKKENEKNKDKTDKKSIQESCSYDRSCCSHSISQSYQVENKNKYKRSKIQRSFSSESCQDKSKKIINELSNLEETFEANKLYANIDKNSSIFEYFGFKKSFTFILYERNDILFLPQNSTILDMIGALQPQKGSYLAQKFLEIVNKNALKVVSTSPLYLLIE.

An N-terminal signal peptide occupies residues 1-19; that stretch reads MKFLAFGLIYFHFCILNRC. The Extracellular segment spans residues 20 to 540; sequence EYITSSTIQK…CYFSAGCIKE (521 aa). 7 disulfide bridges follow: cysteine 30/cysteine 40, cysteine 118/cysteine 147, cysteine 129/cysteine 182, cysteine 148/cysteine 312, cysteine 150/cysteine 168, cysteine 295/cysteine 319, and cysteine 431/cysteine 470. Residues 152-179 are important for membrane fusion; sequence LSDILGMGNDLSRGKVCYALNLGAGSAT. Residues 541–561 traverse the membrane as a helical segment; the sequence is AFKSIASIAGVASALALVIFL. Residues 562-742 are Cytoplasmic-facing; sequence AKNGYLVPII…STSPLYLLIE (181 aa).

This sequence belongs to the HAP2/GCS1 family.

It localises to the cell membrane. The protein localises to the cell junction. In terms of biological role, during fertilization, required for the formation of intercellular membrane pores and subsequent exchange of gametic pronuclei between cells. Probably initiates the formation of intercellular membrane pores by inserting part of its extracellular domain into the cell membrane of the adjoining cell in the mating pair. Mating requires the presence of HAP2 on at least one of the two cells. Mating efficiency is high when HAP2 is present on both cells, and is strongly reduced when HAP2 is present on only one of the two cells. In Tetrahymena thermophila, this protein is Hapless 2.